Consider the following 248-residue polypeptide: Conoporin-Cn1 (248 aa).

Residues 1–23 (MGVQFPALKTMVTVFLLLMGNMS) form the signal peptide. Residues 45-64 (TPGSSLYGVALKDLADTSYN) form an N-terminal region region. 5 residues coordinate phosphocholine: G120, S138, P140, Y167, and Y171.

The protein belongs to the actinoporin family. Conoidea subfamily. In terms of assembly, octamer or nonamer in membranes. Monomer in the soluble state. 9 isoforms are detected in the injectable venom, mainly corresponding to different oxidative states. As to expression, expressed by the venom duct.

The protein resides in the secreted. It is found in the nematocyst. It localises to the target cell membrane. Functionally, pore-forming protein that forms pores of around 1 nm and causes cardiac stimulation and cytolysis. This Conus consors (Singed cone) protein is Conoporin-Cn1.